Reading from the N-terminus, the 514-residue chain is ATP synthase subunit alpha (514 aa).

ATP is bound at residue 170–177 (GDRQIGKT).

It belongs to the ATPase alpha/beta chains family. As to quaternary structure, F-type ATPases have 2 components, CF(1) - the catalytic core - and CF(0) - the membrane proton channel. CF(1) has five subunits: alpha(3), beta(3), gamma(1), delta(1), epsilon(1). CF(0) has three main subunits: a(1), b(2) and c(9-12). The alpha and beta chains form an alternating ring which encloses part of the gamma chain. CF(1) is attached to CF(0) by a central stalk formed by the gamma and epsilon chains, while a peripheral stalk is formed by the delta and b chains.

The protein localises to the cell inner membrane. It carries out the reaction ATP + H2O + 4 H(+)(in) = ADP + phosphate + 5 H(+)(out). In terms of biological role, produces ATP from ADP in the presence of a proton gradient across the membrane. The alpha chain is a regulatory subunit. The polypeptide is ATP synthase subunit alpha (Pseudomonas entomophila (strain L48)).